Here is a 249-residue protein sequence, read N- to C-terminus: Segregation and condensation protein A (249 aa).

The protein belongs to the ScpA family. In terms of assembly, component of a cohesin-like complex composed of ScpA, ScpB and the Smc homodimer, in which ScpA and ScpB bind to the head domain of Smc. The presence of the three proteins is required for the association of the complex with DNA.

It is found in the cytoplasm. Its function is as follows. Participates in chromosomal partition during cell division. May act via the formation of a condensin-like complex containing Smc and ScpB that pull DNA away from mid-cell into both cell halves. This Listeria innocua serovar 6a (strain ATCC BAA-680 / CLIP 11262) protein is Segregation and condensation protein A.